A 242-amino-acid chain; its full sequence is ATP-dependent dethiobiotin synthetase BioD 1 (242 aa).

Residue Asn-12–Thr-17 coordinates ATP. Thr-16 is a binding site for Mg(2+). Residue Lys-37 is part of the active site. Residue Asp-66 coordinates ATP. Mg(2+) is bound by residues Asp-66 and Glu-124. ATP is bound by residues Asn-184 to Arg-185, Pro-213 to Leu-215, and Glu-220.

It belongs to the dethiobiotin synthetase family. Homodimer. It depends on Mg(2+) as a cofactor.

It is found in the cytoplasm. The enzyme catalyses (7R,8S)-7,8-diammoniononanoate + CO2 + ATP = (4R,5S)-dethiobiotin + ADP + phosphate + 3 H(+). It participates in cofactor biosynthesis; biotin biosynthesis; biotin from 7,8-diaminononanoate: step 1/2. Its function is as follows. Catalyzes a mechanistically unusual reaction, the ATP-dependent insertion of CO2 between the N7 and N8 nitrogen atoms of 7,8-diaminopelargonic acid (DAPA, also called 7,8-diammoniononanoate) to form a ureido ring. The sequence is that of ATP-dependent dethiobiotin synthetase BioD 1 from Haemophilus influenzae (strain ATCC 51907 / DSM 11121 / KW20 / Rd).